The sequence spans 118 residues: 5-hydroxyisourate hydrolase (118 aa).

The substrate site is built by His7, Arg46, and Tyr115.

The protein belongs to the transthyretin family. 5-hydroxyisourate hydrolase subfamily. Homotetramer.

It catalyses the reaction 5-hydroxyisourate + H2O = 5-hydroxy-2-oxo-4-ureido-2,5-dihydro-1H-imidazole-5-carboxylate + H(+). Functionally, catalyzes the hydrolysis of 5-hydroxyisourate (HIU) to 2-oxo-4-hydroxy-4-carboxy-5-ureidoimidazoline (OHCU). The polypeptide is 5-hydroxyisourate hydrolase (Brucella suis biovar 1 (strain 1330)).